The primary structure comprises 93 residues: MTEEHVVYIGKKPVMNYVLAVITQFHEGAKEVSIKARGRAISRAVDVAEIVRNRFLKDDVDVKEIKIGTEELPTADGRTTNTSTIEIVLARKA.

At Lys11 the chain carries N6-acetyllysine.

It belongs to the histone-like Alba family. Post-translationally, acetylated. Acetylation at Lys-11 decreases DNA-binding affinity.

It localises to the cytoplasm. It is found in the chromosome. Functionally, binds double-stranded DNA tightly but without sequence specificity. Involved in DNA compaction. This Pyrococcus abyssi (strain GE5 / Orsay) protein is DNA/RNA-binding protein Alba.